The following is a 195-amino-acid chain: Urease accessory protein UreG (195 aa).

Residue 9 to 16 (GPVGSGKT) coordinates GTP.

It belongs to the SIMIBI class G3E GTPase family. UreG subfamily. In terms of assembly, homodimer. UreD, UreF and UreG form a complex that acts as a GTP-hydrolysis-dependent molecular chaperone, activating the urease apoprotein by helping to assemble the nickel containing metallocenter of UreC. The UreE protein probably delivers the nickel.

It localises to the cytoplasm. Functionally, facilitates the functional incorporation of the urease nickel metallocenter. This process requires GTP hydrolysis, probably effectuated by UreG. This is Urease accessory protein UreG from Aliarcobacter butzleri (strain RM4018) (Arcobacter butzleri).